Here is a 476-residue protein sequence, read N- to C-terminus: Chromosomal replication initiator protein DnaA (476 aa).

The tract at residues 1-73 (MTNSEQERWS…LSAWQAEMPE (73 aa)) is domain I, interacts with DnaA modulators. Residues 73 to 132 (EVHRIDLSVRTAMRCATPAKEAPAAVEARRPERSDAKPVSDARAPVMTPVAASHDALGGS) form a domain II region. Positions 92-115 (KEAPAAVEARRPERSDAKPVSDAR) are disordered. A compositionally biased stretch (basic and acidic residues) spans 99–112 (EARRPERSDAKPVS). Positions 133-355 (PLDPRLTFAS…GAINRLLAHS (223 aa)) are domain III, AAA+ region. Positions 180, 182, 183, and 184 each coordinate ATP. The tract at residues 356–476 (KLNNQPVTLD…VESLKRQLQD (121 aa)) is domain IV, binds dsDNA.

The protein belongs to the DnaA family. Oligomerizes as a right-handed, spiral filament on DNA at oriC.

The protein localises to the cytoplasm. Plays an essential role in the initiation and regulation of chromosomal replication. ATP-DnaA binds to the origin of replication (oriC) to initiate formation of the DNA replication initiation complex once per cell cycle. Binds the DnaA box (a 9 base pair repeat at the origin) and separates the double-stranded (ds)DNA. Forms a right-handed helical filament on oriC DNA; dsDNA binds to the exterior of the filament while single-stranded (ss)DNA is stabiized in the filament's interior. The ATP-DnaA-oriC complex binds and stabilizes one strand of the AT-rich DNA unwinding element (DUE), permitting loading of DNA polymerase. After initiation quickly degrades to an ADP-DnaA complex that is not apt for DNA replication. Binds acidic phospholipids. In Bradyrhizobium sp. (strain ORS 278), this protein is Chromosomal replication initiator protein DnaA.